The following is a 149-amino-acid chain: Large ribosomal subunit protein bL9 (149 aa).

This sequence belongs to the bacterial ribosomal protein bL9 family.

In terms of biological role, binds to the 23S rRNA. The chain is Large ribosomal subunit protein bL9 from Helicobacter pylori (strain G27).